Here is a 98-residue protein sequence, read N- to C-terminus: Large ribosomal subunit protein bL25 (98 aa).

Positions 1–23 (MANFVLNAQARAEDKQGKGASRR) are disordered.

The protein belongs to the bacterial ribosomal protein bL25 family. As to quaternary structure, part of the 50S ribosomal subunit; part of the 5S rRNA/L5/L18/L25 subcomplex. Contacts the 5S rRNA. Binds to the 5S rRNA independently of L5 and L18.

Functionally, this is one of the proteins that binds to the 5S RNA in the ribosome where it forms part of the central protuberance. This Acinetobacter baumannii (strain ATCC 17978 / DSM 105126 / CIP 53.77 / LMG 1025 / NCDC KC755 / 5377) protein is Large ribosomal subunit protein bL25.